The primary structure comprises 755 residues: Xaa-Pro dipeptidyl-peptidase (755 aa).

Catalysis depends on charge relay system residues Ser348, Asp468, and His498.

This sequence belongs to the peptidase S15 family. As to quaternary structure, homodimer.

It is found in the cytoplasm. It catalyses the reaction Hydrolyzes Xaa-Pro-|- bonds to release unblocked, N-terminal dipeptides from substrates including Ala-Pro-|-p-nitroanilide and (sequentially) Tyr-Pro-|-Phe-Pro-|-Gly-Pro-|-Ile.. Functionally, removes N-terminal dipeptides sequentially from polypeptides having unsubstituted N-termini provided that the penultimate residue is proline. In Streptococcus thermophilus (strain ATCC BAA-491 / LMD-9), this protein is Xaa-Pro dipeptidyl-peptidase.